A 196-amino-acid chain; its full sequence is Holliday junction branch migration complex subunit RuvA (196 aa).

The tract at residues 1 to 63 (MIASVRGEVL…EDSMTLYGFP (63 aa)) is domain I. The domain II stretch occupies residues 64-138 (DGETRDLFLT…DKVGVAATGG (75 aa)). Residues 138–142 (GALST) form a flexible linker region. Positions 143–196 (NGHAVRSPVVEALVGLGFAAKQAEEATDTVLAANHDATTSSALRSALSLLGKAR) are domain III.

Belongs to the RuvA family. As to quaternary structure, homotetramer. Forms an RuvA(8)-RuvB(12)-Holliday junction (HJ) complex. HJ DNA is sandwiched between 2 RuvA tetramers; dsDNA enters through RuvA and exits via RuvB. An RuvB hexamer assembles on each DNA strand where it exits the tetramer. Each RuvB hexamer is contacted by two RuvA subunits (via domain III) on 2 adjacent RuvB subunits; this complex drives branch migration. In the full resolvosome a probable DNA-RuvA(4)-RuvB(12)-RuvC(2) complex forms which resolves the HJ.

It localises to the cytoplasm. Its function is as follows. The RuvA-RuvB-RuvC complex processes Holliday junction (HJ) DNA during genetic recombination and DNA repair, while the RuvA-RuvB complex plays an important role in the rescue of blocked DNA replication forks via replication fork reversal (RFR). RuvA specifically binds to HJ cruciform DNA, conferring on it an open structure. The RuvB hexamer acts as an ATP-dependent pump, pulling dsDNA into and through the RuvAB complex. HJ branch migration allows RuvC to scan DNA until it finds its consensus sequence, where it cleaves and resolves the cruciform DNA. This is Holliday junction branch migration complex subunit RuvA from Mycobacterium bovis (strain ATCC BAA-935 / AF2122/97).